The following is a 270-amino-acid chain: MNSAVPGTTHDDIAALTPARARERFRAGERVATSGWCPGFTQANLIAVPQQYAYDVLLFTQRNPKACPVIDVTDAGSVEPGIAPGADLRTDLPGYRVYEEGRLVAETGDAREHWREDMVAFLIGCSFTFERALLESGVPVRHLTAGTNVPMYRTNRACRPAGRLHGPMVVSMRAVPADQVAAAVQVTSRFPSMHGAPVHVGDPAALGIEDLAWPDYGDAPVLADGDVPVFWACGVTPQAVIAAVGIPYAVSHAPGQMFISDVPEATWALA.

Belongs to the D-glutamate cyclase family.

This is Putative hydro-lyase Noca_0093 from Nocardioides sp. (strain ATCC BAA-499 / JS614).